Here is an 85-residue protein sequence, read N- to C-terminus: uncharacterized protein (85 aa).

This is an uncharacterized protein from Sinorhizobium fredii (strain NBRC 101917 / NGR234).